Reading from the N-terminus, the 527-residue chain is Peptide chain release factor 3 (527 aa).

Residues 9–277 (AKRRTFAIIS…AVVNWAPMPL (269 aa)) enclose the tr-type G domain. Residues 18 to 25 (SHPDAGKT), 86 to 90 (DTPGH), and 140 to 143 (NKLD) each bind GTP.

The protein belongs to the TRAFAC class translation factor GTPase superfamily. Classic translation factor GTPase family. PrfC subfamily.

It is found in the cytoplasm. Its function is as follows. Increases the formation of ribosomal termination complexes and stimulates activities of RF-1 and RF-2. It binds guanine nucleotides and has strong preference for UGA stop codons. It may interact directly with the ribosome. The stimulation of RF-1 and RF-2 is significantly reduced by GTP and GDP, but not by GMP. The protein is Peptide chain release factor 3 of Pseudomonas syringae pv. tomato (strain ATCC BAA-871 / DC3000).